Consider the following 219-residue polypeptide: 7-cyano-7-deazaguanine synthase (219 aa).

11-21 (FSGGQDSTTCL) contributes to the ATP binding site. Zn(2+) contacts are provided by Cys188, Cys196, Cys199, and Cys202.

Belongs to the QueC family. Requires Zn(2+) as cofactor.

The enzyme catalyses 7-carboxy-7-deazaguanine + NH4(+) + ATP = 7-cyano-7-deazaguanine + ADP + phosphate + H2O + H(+). It functions in the pathway purine metabolism; 7-cyano-7-deazaguanine biosynthesis. Its function is as follows. Catalyzes the ATP-dependent conversion of 7-carboxy-7-deazaguanine (CDG) to 7-cyano-7-deazaguanine (preQ(0)). In Glaesserella parasuis serovar 5 (strain SH0165) (Haemophilus parasuis), this protein is 7-cyano-7-deazaguanine synthase.